A 427-amino-acid chain; its full sequence is Adenylosuccinate synthetase (427 aa).

GTP contacts are provided by residues 12–18 and 40–42; these read GDEGKGK and GHT. Asp-13 functions as the Proton acceptor in the catalytic mechanism. 2 residues coordinate Mg(2+): Asp-13 and Gly-40. IMP is bound by residues 13-16, 38-41, Thr-128, Arg-142, Gln-223, Thr-238, and Arg-302; these read DEGK and NAGH. His-41 (proton donor) is an active-site residue. Residue 298-304 participates in substrate binding; the sequence is TTTGRPR. Residues Arg-304, 330 to 332, and 412 to 414 each bind GTP; these read SID and SVG.

This sequence belongs to the adenylosuccinate synthetase family. Homodimer. Requires Mg(2+) as cofactor.

It localises to the cytoplasm. It catalyses the reaction IMP + L-aspartate + GTP = N(6)-(1,2-dicarboxyethyl)-AMP + GDP + phosphate + 2 H(+). It functions in the pathway purine metabolism; AMP biosynthesis via de novo pathway; AMP from IMP: step 1/2. Plays an important role in the de novo pathway of purine nucleotide biosynthesis. Catalyzes the first committed step in the biosynthesis of AMP from IMP. The chain is Adenylosuccinate synthetase from Staphylococcus aureus (strain MW2).